The following is a 1089-amino-acid chain: Translocase of chloroplast 120, chloroplastic (1089 aa).

N-acetylglycine is present on glycine 2. Disordered stretches follow at residues 158-179 (ATEDVNLENGNTHSSSENGVVS), 255-339 (TLSP…GLGR), and 353-381 (QPRVNGNVSHNQPQQAEDSTTAETDEHDE). Over residues 165–176 (ENGNTHSSSENG) the composition is skewed to polar residues. Phosphoserine is present on residues serine 179, serine 263, and serine 283. The span at 300–312 (EIKESQHMERESE) shows a compositional bias: basic and acidic residues. Positions 327–339 (AALPPARPAGLGR) are enriched in low complexity. The segment covering 353–374 (QPRVNGNVSHNQPQQAEDSTTA) has biased composition (polar residues). The AIG1-type G domain occupies 454–683 (DFSCTIMVLG…KLQDNIPGGQ (230 aa)). The tract at residues 463 to 470 (GKSGVGKS) is G1. GTP contacts are provided by residues 466–471 (GVGKSA) and 485–490 (DAFQVG). Position 470 (serine 470) interacts with Mg(2+). A homodimerization region spans residues 485 to 488 (DAFQ). Residues 489–493 (VGTKK) form a G2 region. Residues 510-513 (DTPG) form a G3 region. A homodimerization region spans residues 548 to 553 (RLDMQS). The G4 stretch occupies residues 582-585 (THAA). Residues histidine 583 and 631–632 (EN) each bind GTP. Positions 631–633 (ENH) are G5. Residues 710–748 (PEQQYDDEDDEDDLDESSDSEEESEYDELPPFKRLTKAE) form a disordered region. The span at 713–737 (QYDDEDDEDDLDESSDSEEESEYDE) shows a compositional bias: acidic residues. Positions 767 to 788 (REKLFMKRQMKEERKRRKLLKK) form a coiled coil. Residues 1064-1080 (LAVVALVPLFKKLLTYY) form a helical membrane-spanning segment.

The protein belongs to the TRAFAC class TrmE-Era-EngA-EngB-Septin-like GTPase superfamily. AIG1/Toc34/Toc159-like paraseptin GTPase family. TOC159 subfamily. As to quaternary structure, homodimer. Part of the TOC core complex that includes 1 protein for the specific recognition of transit peptides surrounded by a ring composed of four proteins forming translocation channels, and four to five GTP-binding proteins providing energy. This core complex can interact with components of the TIC complex to form a larger import complex. Chloroplastic protein precursor such as prSS (precursor of the RuBisCO small subunit) interacts with these complexes. The TOC complex contains a specific subset of polar lipids such as digalactosyldiacylglyceride (DGDG), phosphatidylcholine (PC) and phosphatidylglycerol (PG). It depends on Mg(2+) as a cofactor. Post-translationally, phosphorylated by KOC1. As to expression, expressed in seedlings, flowers, and roots.

Its subcellular location is the plastid. The protein localises to the chloroplast outer membrane. It is found in the cytoplasm. Functionally, GTPase involved in protein precursor import into chloroplasts. Seems to recognize chloroplast-destined precursor proteins and regulate their presentation to the translocation channel through GTP hydrolysis. Probably specialized in the import of nuclear encoded non-photosynthetic preproteins from the cytoplasm to the chloroplast. This is Translocase of chloroplast 120, chloroplastic from Arabidopsis thaliana (Mouse-ear cress).